A 146-amino-acid polypeptide reads, in one-letter code: 3-dehydroquinate dehydratase (146 aa).

The active-site Proton acceptor is the tyrosine 22. Substrate contacts are provided by asparagine 73, histidine 79, and aspartate 86. Histidine 99 serves as the catalytic Proton donor. Substrate contacts are provided by residues 100–101 (IS) and arginine 110.

It belongs to the type-II 3-dehydroquinase family. Homododecamer.

The enzyme catalyses 3-dehydroquinate = 3-dehydroshikimate + H2O. It participates in metabolic intermediate biosynthesis; chorismate biosynthesis; chorismate from D-erythrose 4-phosphate and phosphoenolpyruvate: step 3/7. Functionally, catalyzes a trans-dehydration via an enolate intermediate. The protein is 3-dehydroquinate dehydratase of Prochlorococcus marinus subsp. pastoris (strain CCMP1986 / NIES-2087 / MED4).